A 251-amino-acid chain; its full sequence is Hydroxyacylglutathione hydrolase (251 aa).

Zn(2+)-binding residues include His53, His55, Asp57, His58, His110, Asp127, and His165.

It belongs to the metallo-beta-lactamase superfamily. Glyoxalase II family. As to quaternary structure, monomer. Requires Zn(2+) as cofactor.

The enzyme catalyses an S-(2-hydroxyacyl)glutathione + H2O = a 2-hydroxy carboxylate + glutathione + H(+). Its pathway is secondary metabolite metabolism; methylglyoxal degradation; (R)-lactate from methylglyoxal: step 2/2. Its function is as follows. Thiolesterase that catalyzes the hydrolysis of S-D-lactoyl-glutathione to form glutathione and D-lactic acid. This is Hydroxyacylglutathione hydrolase from Escherichia coli (strain UTI89 / UPEC).